The following is a 295-amino-acid chain: Small ribosomal subunit protein uS2 (295 aa).

Residues 247–295 are disordered; it reads TDKGLTSKNVSKLKQTKKFSKTKNIDEETNTEFEQALNDADENKNSDNA.

The protein belongs to the universal ribosomal protein uS2 family.

The protein is Small ribosomal subunit protein uS2 of Rickettsia conorii (strain ATCC VR-613 / Malish 7).